Consider the following 1040-residue polypeptide: Nucleotide-binding oligomerization domain-containing protein 2 (1040 aa).

CARD domains lie at 26–122 and 126–218; these read CEMC…LHGC and HSLH…EAAT. The ATG16L1-binding motif signature appears at 63-77; sequence WEVLSWEDYEGFHLL. ADP contacts are provided by threonine 239, tyrosine 252, threonine 253, glycine 302, serine 303, glycine 304, lysine 305, serine 306, and threonine 307. The interval 241–274 is required for CARD9 binding; sequence DGAETLCLEDIYTENVLEVWADVGMAGPPQKSPA. The NACHT domain occupies 293-618; it reads DTVLVVGEAG…FFAAFYLALS (326 aa). 299–306 provides a ligand contact to ATP; it reads GEAGSGKS. Cysteine 395 carries S-palmitoyl cysteine lipidation. Histidine 603 is a binding site for ADP. LRR repeat units lie at residues 791–812, 816–839, 844–865, 872–884, 900–920, 928–949, 956–976, 984–1005, and 1012–1032; these read RPVALQLDYNSVGDIGVEQLLP, VCKALYLRDNNISDRGICKLIECA, QLQKLALFNNKLTDGCAHSMAK, NFLALRLGNNYIT, SLQFLGFWGNRVGDEGAQALA, SLRWLSLVGNNIGSVGAQALAL, MLEELCLEENHLQDEGVCSLA, SLKILKLSNNCITYLGAEALLQ, and TILEVWLRGNTFSLEEVDKLG. A lipid anchor (S-palmitoyl cysteine) is attached at cysteine 1033.

It belongs to the NOD1-NOD2 family. As to quaternary structure, homooligomer: homooligomerizes following muramyl dipeptide (MDP)-binding, promoting RIPK2 recruitment. Interacts (via CARD domain) with RIPK2 (via CARD domain). Following RIPK2 recruitment, RIPK2 homooligomerizes via its CARD domain and forms long filaments named RIPosomes. Interacts (via CARD domain) with ubiquitin; inhibiting interaction with RIPK2. Component of a signaling complex consisting of ARHGEF2, NOD2 and RIPK2. Interacts with ANKRD17 (via N-terminus). Interacts with HSPA1A; the interaction enhances NOD2 stability. Interacts (via both CARD domains) with HSP90; the interaction enhances NOD2 stability. Interacts (via CARD domain) with SOCS3; the interaction promotes NOD2 degradation. Interacts (via CARD domain) with ERBIN; the interaction inhibits activation of NOD2. Interacts with MAPKBP1; the interaction is enhanced in the presence of muramyl dipeptide (MDP) and inhibits NOD2 homooligomerization and activation. Interacts with INAVA; the interaction takes place upon Pattern recognition receptor (PRR) stimulation. Interacts (via NACHT domain) with CARD9. Interacts (via CARD domain) with CASP1; this interaction leads to IL1B processing. Also interacts with CASP4. Interacts with NLRP1; this interaction is enhanced in the presence of muramyl dipeptide (MDP) and leads to increased IL1B release. Interacts with NLRP12; this interaction promotes degradation of NOD2 through the ubiquitin-proteasome pathway. Interacts with ANKHD1, C10orf67, CHMP5, DOCK7, ENTR1, KRT15, LDOC1, PPP1R12C, PPP2R3B, TRIM41 and VIM. Interacts with MAVS; interaction takes place following single-stranded RNA (ssRNA)-binding. Interacts with ATG16L1. Interacts with IRGM; promoting IRGM 'Lys-63'-linked polyubiquitination, which is required for interactions with the core autophagy factors. Palmitoylated by ZDHHC5; palmitoylation is required for proper recruitment to the bacterial entry site and hence for proper signaling upon cognate peptidoglycan detection. Palmitoylation promotes localization to the cell membrane. Palmitoylation protects from SQSTM1/p62-dependent autophagic degradation. In terms of processing, polyubiquitinated by TRIM27, leading to proteasome-mediated degradation. Polyubiquitinated and degraded following muramyl dipeptide (MDP) stimulation, conferring MDP tolerance and preventing septic shock. Post-translationally, degraded via selective autophagy following interaction with IRGM. IRGM promotes NOD2-RIPK2 RIPosome recruitment to autophagosome membranes, promoting their SQSTM1/p62-dependent autophagic degradation. O-glycosylated by OGT, O-GlcNAcylation increases protein stability. Expressed in monocytes, macrophages, dendritic cells, hepatocytes, preadipocytes, epithelial cells of oral cavity, lung and intestine, with higher expression in ileal Paneth cells and in intestinal stem cells. In terms of tissue distribution, expressed at higher level in leukocytes.

It localises to the cell membrane. The protein resides in the basolateral cell membrane. The protein localises to the cytoplasm. Its subcellular location is the mitochondrion. Its activity is regulated as follows. ADP-binding promotes an inactive closed conformation. Functionally, pattern recognition receptor (PRR) that detects bacterial peptidoglycan fragments and other danger signals and plays an important role in gastrointestinal immunity. Specifically activated by muramyl dipeptide (MDP), a fragment of bacterial peptidoglycan found in every bacterial peptidoglycan type. NOD2 specifically recognizes and binds 6-O-phospho-MDP, the phosphorylated form of MDP, which is generated by NAGK. 6-O-phospho-MDP-binding triggers oligomerization that facilitates the binding and subsequent activation of the proximal adapter receptor-interacting RIPK2. Following recruitment, RIPK2 undergoes 'Met-1'- (linear) and 'Lys-63'-linked polyubiquitination by E3 ubiquitin-protein ligases XIAP, BIRC2, BIRC3 and the LUBAC complex, becoming a scaffolding protein for downstream effectors, triggering activation of the NF-kappa-B and MAP kinases signaling. This in turn leads to the transcriptional activation of hundreds of genes involved in immune response. Its ability to detect bacterial MDP plays a central role in maintaining the equilibrium between intestinal microbiota and host immune responses to control inflammation. An imbalance in this relationship results in dysbiosis, whereby pathogenic bacteria prevail on commensals, causing damage in the intestinal epithelial barrier as well as allowing bacterial invasion and inflammation. Acts as a regulator of appetite by sensing MDP in a subset of brain neurons: microbiota-derived MDP reach the brain, where they bind and activate NOD2 in inhibitory hypothalamic neurons, decreasing neuronal activity, thereby regulating satiety and body temperature. NOD2-dependent MDP-sensing of bacterial cell walls in the intestinal epithelial compartment contributes to sustained postnatal growth upon undernutrition. Also plays a role in antiviral response by acting as a sensor of single-stranded RNA (ssRNA) from viruses: upon ssRNA-binding, interacts with MAVS, leading to activation of interferon regulatory factor-3/IRF3 and expression of type I interferon. Also acts as a regulator of autophagy in dendritic cells via its interaction with ATG16L1, possibly by recruiting ATG16L1 at the site of bacterial entry. NOD2 activation in the small intestine crypt also contributes to intestinal stem cells survival and function: acts by promoting mitophagy via its association with ATG16L1. In addition to its main role in innate immunity, also regulates the adaptive immune system by acting as regulator of helper T-cell and regulatory T-cells (Tregs). Besides recognizing pathogens, also involved in the endoplasmic reticulum stress response: acts by sensing and binding to the cytosolic metabolite sphingosine-1-phosphate generated in response to endoplasmic reticulum stress, initiating an inflammation process that leads to activation of the NF-kappa-B and MAP kinases signaling. May also be involved in NLRP1 activation following activation by MDP, leading to CASP1 activation and IL1B release in macrophages. Its function is as follows. Acts as a pattern recognition receptor (PRR); able to activate NF-kappa-B. In terms of biological role, can activate NF-kappa-B in a muramyl dipeptide (MDP)-independent manner. This is Nucleotide-binding oligomerization domain-containing protein 2 from Homo sapiens (Human).